We begin with the raw amino-acid sequence, 648 residues long: Replication restart protein PriA (648 aa).

A Helicase ATP-binding domain is found at 131–297 (TILNESNKPT…EIGKYQLVTL (167 aa)). 144–151 (GVTGSGKT) is an ATP binding site. Positions 240–243 (DEEH) match the DEAH box motif. The Zn(2+) site is built by cysteine 358, cysteine 361, cysteine 367, cysteine 370, cysteine 385, cysteine 388, cysteine 398, and cysteine 401. Residues 393-548 (KIFSSCPECL…SFFANELEIR (156 aa)) enclose the Helicase C-terminal domain.

This sequence belongs to the helicase family. PriA subfamily. In terms of assembly, component of the replication restart primosome. Zn(2+) serves as cofactor.

The enzyme catalyses Couples ATP hydrolysis with the unwinding of duplex DNA by translocating in the 3'-5' direction.. The catalysed reaction is ATP + H2O = ADP + phosphate + H(+). Its function is as follows. Initiates the restart of stalled replication forks, which reloads the replicative helicase on sites other than the origin of replication. Recognizes and binds to abandoned replication forks and remodels them to uncover a helicase loading site. Promotes assembly of the primosome at these replication forks. The sequence is that of Replication restart protein PriA from Rickettsia felis (strain ATCC VR-1525 / URRWXCal2) (Rickettsia azadi).